Consider the following 372-residue polypeptide: Alanine dehydrogenase 2 (372 aa).

His-95 is a catalytic residue. Position 169–199 (169–199 (KVTIIGGGQAGTNAAKIALGLGADVTILDVN)) interacts with NAD(+).

This sequence belongs to the AlaDH/PNT family.

It carries out the reaction L-alanine + NAD(+) + H2O = pyruvate + NH4(+) + NADH + H(+). It functions in the pathway amino-acid degradation; L-alanine degradation via dehydrogenase pathway; NH(3) and pyruvate from L-alanine: step 1/1. Functionally, may play a role in cell wall synthesis as L-alanine is an important constituent of the peptidoglycan layer. The chain is Alanine dehydrogenase 2 (ald2) from Staphylococcus aureus (strain N315).